A 492-amino-acid polypeptide reads, in one-letter code: Protein nucleotidyltransferase YdiU (492 aa).

ATP-binding residues include Gly88, Gly90, Arg91, Lys111, Asp123, Gly124, Arg174, and Arg181. Asp250 serves as the catalytic Proton acceptor. Mg(2+) is bound by residues Asn251 and Asp260. Asp260 contributes to the ATP binding site.

The protein belongs to the SELO family. It depends on Mg(2+) as a cofactor. Mn(2+) is required as a cofactor.

The catalysed reaction is L-seryl-[protein] + ATP = 3-O-(5'-adenylyl)-L-seryl-[protein] + diphosphate. It catalyses the reaction L-threonyl-[protein] + ATP = 3-O-(5'-adenylyl)-L-threonyl-[protein] + diphosphate. The enzyme catalyses L-tyrosyl-[protein] + ATP = O-(5'-adenylyl)-L-tyrosyl-[protein] + diphosphate. It carries out the reaction L-histidyl-[protein] + UTP = N(tele)-(5'-uridylyl)-L-histidyl-[protein] + diphosphate. The catalysed reaction is L-seryl-[protein] + UTP = O-(5'-uridylyl)-L-seryl-[protein] + diphosphate. It catalyses the reaction L-tyrosyl-[protein] + UTP = O-(5'-uridylyl)-L-tyrosyl-[protein] + diphosphate. In terms of biological role, nucleotidyltransferase involved in the post-translational modification of proteins. It can catalyze the addition of adenosine monophosphate (AMP) or uridine monophosphate (UMP) to a protein, resulting in modifications known as AMPylation and UMPylation. This is Protein nucleotidyltransferase YdiU from Rhodopseudomonas palustris (strain HaA2).